Consider the following 278-residue polypeptide: Large ribosomal subunit protein uL2 (278 aa).

Disordered stretches follow at residues 29-55 (PEKS…RHQG) and 225-278 (VMNP…NKKR). Residues 258–278 (RSNKKASNKYIVRRRTKNKKR) are compositionally biased toward basic residues.

Belongs to the universal ribosomal protein uL2 family. In terms of assembly, part of the 50S ribosomal subunit. Forms a bridge to the 30S subunit in the 70S ribosome. The N-terminus is blocked. In terms of processing, phosphorylated on serine and threonine residues.

Its function is as follows. One of the primary rRNA binding proteins. Required for association of the 30S and 50S subunits to form the 70S ribosome, for tRNA binding and peptide bond formation. It has been suggested to have peptidyltransferase activity; this is somewhat controversial. Makes several contacts with the 16S rRNA in the 70S ribosome. This Streptomyces collinus protein is Large ribosomal subunit protein uL2.